We begin with the raw amino-acid sequence, 539 residues long: Putative dimethylaniline monooxygenase [N-oxide-forming] 6 (539 aa).

Residues 9–13 (GAGVS), E32, 40–41 (LW), and 61–62 (NS) contribute to the FAD site. An NADP(+)-binding site is contributed by 195 to 198 (SGSD). Residues 518–538 (FYNLLKMLSFPLLLLAVTLTF) form a helical membrane-spanning segment.

It belongs to the FMO family. Requires FAD as cofactor.

Its subcellular location is the microsome membrane. It is found in the endoplasmic reticulum membrane. It carries out the reaction N,N-dimethylaniline + NADPH + O2 + H(+) = N,N-dimethylaniline N-oxide + NADP(+) + H2O. It is probable that this protein is only produced in very small quantity or not at all as the gene coding for it seems to be unable to produce full-length transcripts. This Homo sapiens (Human) protein is Putative dimethylaniline monooxygenase [N-oxide-forming] 6 (FMO6P).